The following is a 98-amino-acid chain: NADH-ubiquinone oxidoreductase chain 4L (98 aa).

Transmembrane regions (helical) follow at residues 1-21 (MSLT…GLLL), 29-49 (SLLC…MIIL), and 61-81 (IILL…LVMV).

Belongs to the complex I subunit 4L family. In terms of assembly, core subunit of respiratory chain NADH dehydrogenase (Complex I) which is composed of 45 different subunits.

The protein localises to the mitochondrion inner membrane. It catalyses the reaction a ubiquinone + NADH + 5 H(+)(in) = a ubiquinol + NAD(+) + 4 H(+)(out). Its function is as follows. Core subunit of the mitochondrial membrane respiratory chain NADH dehydrogenase (Complex I) which catalyzes electron transfer from NADH through the respiratory chain, using ubiquinone as an electron acceptor. Part of the enzyme membrane arm which is embedded in the lipid bilayer and involved in proton translocation. The chain is NADH-ubiquinone oxidoreductase chain 4L (MT-ND4L) from Platyrrhinus brachycephalus (Short-headed broad-nosed bat).